The primary structure comprises 478 residues: MNLSIQDELQLFSEELCRHLTPSFLEELAKKLGFVKRKRKFSGSELATIFIWISQRTASDSLVRLCSQLHAATGTLMSPEGLNKRFDKKAVEFLKYIFSTLWKSKLCKTSAISSTALTHFQRIRILDATIFQIPKHLASIYPGSGGCAQTAGIKIQLEYDLHSGQFLNFQVGPGKNNDKTFGTECLDTLRPGDLCIRDLGYFSLEDLDQMDQRGAYYISRLKLNHTVYIKNPSPEYFRNGTVKKQSQYIQVDLEHIMNHLKPGQTYEIKEAYIGKNQKLFTRVIIYRLTEKQIQERRKKQAYTESKKGITFSEKSKRLTGINIYVSNTPEGIVPMEQIHDFYSLRWQIEIIFKTWKSLFQIHHWQNIKQERLECHVYGRLIAIFICSSTMFKMRKLLLQKNKRELSEYKAIGMIQDHVSLLYQAIQRNTQDLTKILIRLFDLLQKNGRKSHRYERKTIFDIMGVVYEYNGFGKQKKAA.

Belongs to the transposase 11 family.

In terms of biological role, involved in the transposition of the insertion sequence. The chain is Transposase for insertion sequence element IS231B from Bacillus thuringiensis subsp. berliner.